Reading from the N-terminus, the 84-residue chain is Large ribosomal subunit protein bL27 (84 aa).

The segment at 1 to 20 (MAHKKGGGSTKNGRDSNPKY) is disordered.

Belongs to the bacterial ribosomal protein bL27 family.

This Chlorobaculum tepidum (strain ATCC 49652 / DSM 12025 / NBRC 103806 / TLS) (Chlorobium tepidum) protein is Large ribosomal subunit protein bL27.